We begin with the raw amino-acid sequence, 634 residues long: DNA gyrase subunit B (634 aa).

An ATPase domain region spans residues 1–220 (MSYDASAIRV…EEVFLDKGGV (220 aa)). A transducer domain region spans residues 221-390 (ASFAKALAEG…EAARKARELV (170 aa)). A Toprim domain is found at 416–534 (AELFIVEGDS…RGHVYIAQPP (119 aa)). E422, D499, and D501 together coordinate Mg(2+).

It belongs to the type II topoisomerase GyrB family. In terms of assembly, heterotetramer, composed of two GyrA and two GyrB chains. Non-hydrolyzable ATP analogs induce dimerization, novobiocin also induces a small amount of dimerization. The two subunits form an intertwined dimer where the GyrB ATPase transducer helix of 1 subunit connects to the Toprim domain of the other GyrB subunit through a 10 residue linker. In the heterotetramer, GyrA contains the active site tyrosine that forms a covalent intermediate with the DNA, while GyrB binds cofactors and catalyzes ATP hydrolysis. Requires Mg(2+) as cofactor. The cofactor is Mn(2+). Ca(2+) is required as a cofactor.

It localises to the cytoplasm. The enzyme catalyses ATP-dependent breakage, passage and rejoining of double-stranded DNA.. In terms of biological role, a type II topoisomerase that negatively supercoils closed circular double-stranded (ds) DNA in an ATP-dependent manner. It probably also catalyzes the interconversion of other topological isomers of double-stranded DNA rings, including catenanes. Relaxes negatively supercoiled DNA in an ATP-independent manner. At comparable concentrations T.thermophilus gyrase does not introduce as many negative supercoils into DNA as the E.coli enzyme. Negative supercoiling favors strand separation, and DNA replication, transcription, recombination and repair, all of which involve strand separation. Type II topoisomerases break and join 2 DNA strands simultaneously in an ATP-dependent manner. The protein is DNA gyrase subunit B of Thermus thermophilus (strain ATCC 27634 / DSM 579 / HB8).